A 175-amino-acid chain; its full sequence is Shikimate kinase (175 aa).

Glycine 16 to threonine 21 is an ATP binding site. A Mg(2+)-binding site is contributed by serine 20. Substrate contacts are provided by aspartate 38, arginine 62, and glycine 84. Position 122 (arginine 122) interacts with ATP. Residue arginine 141 coordinates substrate.

It belongs to the shikimate kinase family. In terms of assembly, monomer. Requires Mg(2+) as cofactor.

It localises to the cytoplasm. The enzyme catalyses shikimate + ATP = 3-phosphoshikimate + ADP + H(+). It participates in metabolic intermediate biosynthesis; chorismate biosynthesis; chorismate from D-erythrose 4-phosphate and phosphoenolpyruvate: step 5/7. Its function is as follows. Catalyzes the specific phosphorylation of the 3-hydroxyl group of shikimic acid using ATP as a cosubstrate. This Legionella pneumophila (strain Paris) protein is Shikimate kinase.